Here is a 224-residue protein sequence, read N- to C-terminus: tRNA (guanine-N(7)-)-methyltransferase (224 aa).

Glu-54, Glu-79, Glu-106, and Asp-129 together coordinate S-adenosyl-L-methionine. Asp-129 is a catalytic residue. 2 residues coordinate substrate: Lys-133 and Asp-165.

It belongs to the class I-like SAM-binding methyltransferase superfamily. TrmB family.

It carries out the reaction guanosine(46) in tRNA + S-adenosyl-L-methionine = N(7)-methylguanosine(46) in tRNA + S-adenosyl-L-homocysteine. Its pathway is tRNA modification; N(7)-methylguanine-tRNA biosynthesis. Catalyzes the formation of N(7)-methylguanine at position 46 (m7G46) in tRNA. The protein is tRNA (guanine-N(7)-)-methyltransferase of Chlamydia caviae (strain ATCC VR-813 / DSM 19441 / 03DC25 / GPIC) (Chlamydophila caviae).